The chain runs to 285 residues: 2-dehydro-3-deoxyphosphooctonate aldolase (285 aa).

It belongs to the KdsA family.

It is found in the cytoplasm. The enzyme catalyses D-arabinose 5-phosphate + phosphoenolpyruvate + H2O = 3-deoxy-alpha-D-manno-2-octulosonate-8-phosphate + phosphate. It participates in carbohydrate biosynthesis; 3-deoxy-D-manno-octulosonate biosynthesis; 3-deoxy-D-manno-octulosonate from D-ribulose 5-phosphate: step 2/3. Its pathway is bacterial outer membrane biogenesis; lipopolysaccharide biosynthesis. The protein is 2-dehydro-3-deoxyphosphooctonate aldolase of Verminephrobacter eiseniae (strain EF01-2).